A 298-amino-acid polypeptide reads, in one-letter code: HTH-type transcriptional regulator ArgP (298 aa).

Residues 4-60 (LDYKWIEALDAVVAQGGFERAAEELYISQSAVSQRIKQLERFLAQPVLIREQPPKPT) form the HTH lysR-type domain. The H-T-H motif DNA-binding region spans 21–40 (FERAAEELYISQSAVSQRIK).

This sequence belongs to the LysR transcriptional regulatory family. In terms of assembly, homodimer.

Functionally, controls the transcription of genes involved in arginine and lysine metabolism. This is HTH-type transcriptional regulator ArgP from Vibrio vulnificus (strain CMCP6).